A 257-amino-acid polypeptide reads, in one-letter code: Large ribosomal subunit protein uL3 (257 aa).

Positions L232–K257 are disordered.

The protein belongs to the universal ribosomal protein uL3 family. As to quaternary structure, part of the 50S ribosomal subunit. Forms a cluster with proteins L14 and L19.

Functionally, one of the primary rRNA binding proteins, it binds directly near the 3'-end of the 23S rRNA, where it nucleates assembly of the 50S subunit. The chain is Large ribosomal subunit protein uL3 from Mycoplasma genitalium (strain ATCC 33530 / DSM 19775 / NCTC 10195 / G37) (Mycoplasmoides genitalium).